Consider the following 319-residue polypeptide: Na(+)-translocating NADH-quinone reductase subunit C (319 aa).

The helical transmembrane segment at 14–34 (WYVILFIFALSLFSSVFLSTV) threads the bilayer. Position 283 is an FMN phosphoryl threonine (Thr-283).

Belongs to the NqrC family. In terms of assembly, composed of six subunits; NqrA, NqrB, NqrC, NqrD, NqrE and NqrF. FMN serves as cofactor.

It localises to the cell inner membrane. The enzyme catalyses a ubiquinone + n Na(+)(in) + NADH + H(+) = a ubiquinol + n Na(+)(out) + NAD(+). In terms of biological role, NQR complex catalyzes the reduction of ubiquinone-1 to ubiquinol by two successive reactions, coupled with the transport of Na(+) ions from the cytoplasm to the periplasm. NqrA to NqrE are probably involved in the second step, the conversion of ubisemiquinone to ubiquinol. The chain is Na(+)-translocating NADH-quinone reductase subunit C from Chlamydia caviae (strain ATCC VR-813 / DSM 19441 / 03DC25 / GPIC) (Chlamydophila caviae).